The chain runs to 635 residues: Signal recognition particle subunit SRP72 (635 aa).

7 TPR repeats span residues Gly-7 to Glu-42, Gly-75 to Asp-105, Val-106 to Asp-139, Tyr-171 to Ser-204, Asp-220 to Asp-253, Ser-255 to Lys-290, and Val-436 to Leu-469. The disordered stretch occupies residues Lys-539–Phe-635. Basic and acidic residues predominate over residues Asp-557–Thr-569. Over residues Lys-625 to Phe-635 the composition is skewed to basic residues.

This sequence belongs to the SRP72 family. Heterodimer with srpa-68. Srpa-68-srpa-72 heterodimer formation is stabilized by the presence of 7SL RNA. Component of a signal recognition particle (SRP) complex that consists of a 7SL RNA molecule of 300 nucleotides and six protein subunits: srpa-72, srpa-68, SRP54, F37F2.2/SRP19, F25G6.8/SRP14 and ZK512.4/SRP9. Within the SRP complex, interacts (via N-terminus) with srpa-68 (via C-terminus).

Its subcellular location is the cytoplasm. It is found in the endoplasmic reticulum. Functionally, component of the signal recognition particle (SRP) complex, a ribonucleoprotein complex that mediates the cotranslational targeting of secretory and membrane proteins to the endoplasmic reticulum (ER). The SRP complex interacts with the signal sequence in nascent secretory and membrane proteins and directs them to the membrane of the ER. The SRP complex targets the ribosome-nascent chain complex to the SRP receptor (SR), which is anchored in the ER, where SR compaction and GTPase rearrangement drive cotranslational protein translocation into the ER. Binds the signal recognition particle RNA (7SL RNA) in presence of srpa-68. Can bind 7SL RNA with low affinity. The SRP complex possibly participates in the elongation arrest function. This is Signal recognition particle subunit SRP72 from Caenorhabditis elegans.